The primary structure comprises 264 residues: Carbonic anhydrase 7 (264 aa).

In terms of domain architecture, Alpha-carbonic anhydrase spans 5 to 262 (HGWGYGQDDG…LKGRVVKASF (258 aa)). The active-site Proton donor/acceptor is H66. Positions 96, 98, and 121 each coordinate Zn(2+). 201 to 202 (TT) lines the substrate pocket.

It belongs to the alpha-carbonic anhydrase family. The cofactor is Zn(2+).

It is found in the cytoplasm. The catalysed reaction is hydrogencarbonate + H(+) = CO2 + H2O. Activated by histamine, L-adrenaline, L- and D-histidine, and L- and D-phenylalanine. Inhibited by coumarins, sulfonamide derivatives such as acetazolamide (AZA), by saccharin and Foscarnet (phosphonoformate trisodium salt). In terms of biological role, reversible hydration of carbon dioxide. The protein is Carbonic anhydrase 7 (CA7) of Homo sapiens (Human).